A 450-amino-acid polypeptide reads, in one-letter code: Cyclin-A2-3 (450 aa).

Disordered stretches follow at residues 18–53 and 75–94; these read ALRA…NKRK and NSKQ…SQLA. A compositionally biased stretch (polar residues) spans 23–34; sequence EVTSTTQNQQRV.

It belongs to the cyclin family. Cyclin AB subfamily. Interacts with CDKA-1. Interacts with SAMBA.

It localises to the nucleus. Negatively regulates endocycles and acts as a regulator of ploidy levels in endoreduplication. Promotes divisions in the guard cells (GCs) after the guard mother cells (GMC) symmetric division. The polypeptide is Cyclin-A2-3 (CYCA2-3) (Arabidopsis thaliana (Mouse-ear cress)).